The chain runs to 174 residues: MKHTLSVLVQDEAGVLSRISGLFARRGFNIASLAVGPAEQIGVSRITMVVQGDNRTIEQLTKQLYKLVNILNVQDVTNIPSVERELMLIKIQVNSQNRIEALEIVKIFRANVVDIAEDLIIVEVTGDPGKIVAIEQLLTKFGIIEIARTGKISLVRTSKINTEYLKDKVVAYNA.

An ACT domain is found at 4–78 (TLSVLVQDEA…NILNVQDVTN (75 aa)).

The protein belongs to the acetolactate synthase small subunit family. In terms of assembly, dimer of large and small chains.

It localises to the plastid. It is found in the chloroplast. It carries out the reaction 2 pyruvate + H(+) = (2S)-2-acetolactate + CO2. The protein operates within amino-acid biosynthesis; L-isoleucine biosynthesis; L-isoleucine from 2-oxobutanoate: step 1/4. It functions in the pathway amino-acid biosynthesis; L-valine biosynthesis; L-valine from pyruvate: step 1/4. The polypeptide is Acetolactate synthase small subunit (ilvH) (Porphyra purpurea (Red seaweed)).